Reading from the N-terminus, the 327-residue chain is Ribosomal RNA large subunit methyltransferase F (327 aa).

This sequence belongs to the methyltransferase superfamily. METTL16/RlmF family.

The protein resides in the cytoplasm. The enzyme catalyses adenosine(1618) in 23S rRNA + S-adenosyl-L-methionine = N(6)-methyladenosine(1618) in 23S rRNA + S-adenosyl-L-homocysteine + H(+). Functionally, specifically methylates the adenine in position 1618 of 23S rRNA. The sequence is that of Ribosomal RNA large subunit methyltransferase F from Marinomonas sp. (strain MWYL1).